The primary structure comprises 381 residues: MAMNIRKIHPLLKIMNQTLIDLPAPSNISIWWNFGSLLGLCLVIQIVTGLFLAMHYTADITMAFSSVTHICRDVNYGWLIRNIHANGASLFFVCIYFHIARGLYYGSYLYKETWNIGVILLFLLMATAFVGYVLPWGQMSFWGATVITNLLSAFPYIGDTLVQWIWGGFSVDNATLTRFFAFHFLLPFLITALMIIHILFLHETGSNNPMGLNSDMDKISFHPYFIYKDALGFLSLLILLGILALFLPNLLGDTENFIPANPLVTPPHIKPEWYFLFAYAILRSIPNKLGGVLALLFSILILMLVPFLHTSKQRSSTFRPLTQVFFWILVANMLVLTWIGGQPVEQPFILIGQIASISYFSLFLIAIPLAGWWENKILGLN.

A run of 4 helical transmembrane segments spans residues 34 to 54 (FGSL…FLAM), 78 to 99 (WLIR…YFHI), 114 to 134 (WNIG…GYVL), and 179 to 199 (FFAF…IHIL). H84 and H98 together coordinate heme b. Heme b is bound by residues H183 and H197. Position 202 (H202) interacts with a ubiquinone. 4 consecutive transmembrane segments (helical) span residues 227-247 (YKDA…ALFL), 289-309 (LGGV…PFLH), 321-341 (LTQV…WIGG), and 348-368 (FILI…IAIP).

It belongs to the cytochrome b family. As to quaternary structure, the cytochrome bc1 complex contains 3 respiratory subunits (MT-CYB, CYC1 and UQCRFS1), 2 core proteins (UQCRC1 and UQCRC2) and probably 6 low-molecular weight proteins. Heme b serves as cofactor.

It is found in the mitochondrion inner membrane. In terms of biological role, component of the ubiquinol-cytochrome c reductase complex (complex III or cytochrome b-c1 complex) that is part of the mitochondrial respiratory chain. The b-c1 complex mediates electron transfer from ubiquinol to cytochrome c. Contributes to the generation of a proton gradient across the mitochondrial membrane that is then used for ATP synthesis. In Carcharodon carcharias (Great white shark), this protein is Cytochrome b (mt-cyb).